We begin with the raw amino-acid sequence, 167 residues long: UPF0225 protein VV1_2912 (167 aa).

Belongs to the UPF0225 family.

The protein is UPF0225 protein VV1_2912 of Vibrio vulnificus (strain CMCP6).